A 121-amino-acid polypeptide reads, in one-letter code: Large ribosomal subunit protein uL18 (121 aa).

Belongs to the universal ribosomal protein uL18 family. In terms of assembly, part of the 50S ribosomal subunit; part of the 5S rRNA/L5/L18/L25 subcomplex. Contacts the 5S and 23S rRNAs.

Functionally, this is one of the proteins that bind and probably mediate the attachment of the 5S RNA into the large ribosomal subunit, where it forms part of the central protuberance. The polypeptide is Large ribosomal subunit protein uL18 (Ureaplasma urealyticum serovar 10 (strain ATCC 33699 / Western)).